We begin with the raw amino-acid sequence, 447 residues long: MTRLFGTDGVRGLANEVLTAPLALKLGAAAAHVLTAEKRVDGRRPVAIVGRDPRVSGEMLAAALSAGMASQGVDVIRVGVIPTPAVAFLTDDYGADMGVMISASHNPMPDNGIKFFSAGGHKLPDHVEDEIERVMDSLPAEGPTGHGVGRVIEEATDAQDRYLEHLKEAVPTSLEGIKIVVDAANGAASVVAPTAYEAAGATVIAIHNKPDSYNINMDCGSTHIDQVQAAVLKHGADLGLAHDGDADRCLAVDKDGNLVDGDQIMALLAIAMKENGELRKNTLVGTVMSNLGLKIAMDEAGITLRTTKVGDRYVLEDLNAGGFSLGGEQSGHIVLPDHGTTGDGTLTGLSIMARMAETGKSLGELAQAMTVLPQVLINVPVSDKSTIVSHPSVVAAIAEAEAELGATGRVLLRASGTEELFRVMVEAGDKEQARRIAGRLAAVVAEV.

Catalysis depends on Ser-104, which acts as the Phosphoserine intermediate. Positions 104, 243, 245, and 247 each coordinate Mg(2+). The residue at position 104 (Ser-104) is a Phosphoserine.

Belongs to the phosphohexose mutase family. Requires Mg(2+) as cofactor. Activated by phosphorylation.

The catalysed reaction is alpha-D-glucosamine 1-phosphate = D-glucosamine 6-phosphate. In terms of biological role, catalyzes the conversion of glucosamine-6-phosphate to glucosamine-1-phosphate. The polypeptide is Phosphoglucosamine mutase (Corynebacterium glutamicum (strain ATCC 13032 / DSM 20300 / JCM 1318 / BCRC 11384 / CCUG 27702 / LMG 3730 / NBRC 12168 / NCIMB 10025 / NRRL B-2784 / 534)).